Here is a 379-residue protein sequence, read N- to C-terminus: Cyclic di-GMP phosphodiesterase PdeB (379 aa).

Residues 114 to 310 (FYKKQKKIFI…PLDFIVELND (197 aa)) enclose the HD-GYP domain.

Requires Mn(2+) as cofactor.

It carries out the reaction 3',3'-c-di-GMP + 2 H2O = 2 GMP + 2 H(+). Phosphodiesterase (PDE) that catalyzes the hydrolysis of cyclic diguanylate (c-di-GMP) to GMP. This chain is Cyclic di-GMP phosphodiesterase PdeB, found in Borreliella burgdorferi (strain ATCC 35210 / DSM 4680 / CIP 102532 / B31) (Borrelia burgdorferi).